Consider the following 595-residue polypeptide: Protein halfway (595 aa).

Disordered regions lie at residues 1 to 42 and 64 to 98; these read MLLT…ADDE and TGAA…PLLP. N-linked (GlcNAc...) asparagine glycans are attached at residues asparagine 250 and asparagine 255. The region spanning 347–402 is the LRRNT domain; it reads ESTKRCMTKCPVIPNYGSCKCRFESIMIIQDDQSKPKCHVDCSNLGLVELPPRLPD. LRR repeat units follow at residues 403-424, 429-450, and 454-475; these read NTFV…FQTN, NINR…EGTK, and NFQR…FLNN. Positions 489 to 538 constitute an LRRCT domain; that stretch reads NKLQCDCNSAKTLQNWLKERSTDIPDYMEIRCRNIPQSVIELQEAKLCQS.

Its function is as follows. Has a role in the ecdysone induced cascade; probably indirect control of 'late' ecdysone genes. In Drosophila pseudoobscura pseudoobscura (Fruit fly), this protein is Protein halfway (hfw).